Here is a 403-residue protein sequence, read N- to C-terminus: MKLEVFVPRAAHGDKQGSDLEGAGGSDAPSPLSAAGDDSLGSDGDCAANSPAAGGGARDTQGDGEQSAGGGPGAEEAIPAAAAAAVVAEGAEAGAAGPGAGGAGSGEGARSKPYTRRPKPPYSYIALIAMAIRDSAGGRLTLAEINEYLMGKFPFFRGSYTGWRNSVRHNLSLNDCFVKVLRDPSRPWGKDNYWMLNPNSEYTFADGVFRRRRKRLSHRAPVPAPGLRPEEAPGLPAAPPPAPAAPASPRMRSPARQEERASPAGKFSSSFAIDSILRKPFRSRRLRDTAPGTTLQWGAAPCPPLPAFPALLPAAPCRALLPLCAYGAGEPARLGAREAEVPPTAPPLLLAPLPAAAPAKPLRGPAAGGAHLYCPLRLPAALQAASVRRPGPHLPYPVETLLA.

Disordered stretches follow at residues 1-75 and 94-116; these read MKLE…PGAE and GAAG…PYTR. The segment covering 32–48 has biased composition (low complexity); it reads LSAAGDDSLGSDGDCAA. The span at 96–107 shows a compositional bias: gly residues; the sequence is AGPGAGGAGSGE. Residues 119-214 constitute a DNA-binding region (fork-head); it reads KPPYSYIALI…ADGVFRRRRK (96 aa). Residues 216 to 266 are disordered; that stretch reads LSHRAPVPAPGLRPEEAPGLPAAPPPAPAAPASPRMRSPARQEERASPAGK. The span at 236–246 shows a compositional bias: pro residues; that stretch reads PAAPPPAPAAP.

As to expression, expressed predominantly in the stomach, trachea, bladder and salivary gland.

It localises to the nucleus. Plays a role in hair follicle differentiation. This chain is Forkhead box protein Q1 (FOXQ1), found in Homo sapiens (Human).